Reading from the N-terminus, the 138-residue chain is Large ribosomal subunit protein uL16 (138 aa).

This sequence belongs to the universal ribosomal protein uL16 family. Part of the 50S ribosomal subunit.

In terms of biological role, binds 23S rRNA and is also seen to make contacts with the A and possibly P site tRNAs. The polypeptide is Large ribosomal subunit protein uL16 (Syntrophobacter fumaroxidans (strain DSM 10017 / MPOB)).